Reading from the N-terminus, the 312-residue chain is Light-independent protochlorophyllide reductase iron-sulfur ATP-binding protein (312 aa).

ATP is bound by residues 55–60 and Lys84; that span reads GIGKST. Ser59 contributes to the Mg(2+) binding site. [4Fe-4S] cluster is bound by residues Cys140 and Cys174. Residues 225-226 and 249-251 contribute to the ATP site; these read NR and PDL.

It belongs to the NifH/BchL/ChlL family. In terms of assembly, homodimer. Protochlorophyllide reductase is composed of three subunits; BchL, BchN and BchB. [4Fe-4S] cluster serves as cofactor.

The catalysed reaction is chlorophyllide a + oxidized 2[4Fe-4S]-[ferredoxin] + 2 ADP + 2 phosphate = protochlorophyllide a + reduced 2[4Fe-4S]-[ferredoxin] + 2 ATP + 2 H2O. It participates in porphyrin-containing compound metabolism; bacteriochlorophyll biosynthesis (light-independent). In terms of biological role, component of the dark-operative protochlorophyllide reductase (DPOR) that uses Mg-ATP and reduced ferredoxin to reduce ring D of protochlorophyllide (Pchlide) to form chlorophyllide a (Chlide). This reaction is light-independent. The L component serves as a unique electron donor to the NB-component of the complex, and binds Mg-ATP. The chain is Light-independent protochlorophyllide reductase iron-sulfur ATP-binding protein from Rhodopseudomonas palustris (strain BisB18).